The chain runs to 241 residues: MHKLFVPYVMGNRDFIENVKTLSEAGADIVEVGVPFSDPVADGPVIMNVGNKAIQEGVNIQYIFDQLTENQDEIQSKYVLMTYYNIINHYGELAFLNACEQAGVYGLIIPDLPHELVQQLKARHPERKTNIISLIAMTTSNTRSHQIAKDAEGFIYTVTMNATTGEDGKFHPELKNRIKDIKAHTEVPVVAGFGIRTAAHVKDIIEASDGVVIGSEIVKRFENDDKQTTIEYLKTIRNVLN.

Active-site proton acceptor residues include glutamate 31 and aspartate 42.

It belongs to the TrpA family. In terms of assembly, tetramer of two alpha and two beta chains.

The catalysed reaction is (1S,2R)-1-C-(indol-3-yl)glycerol 3-phosphate + L-serine = D-glyceraldehyde 3-phosphate + L-tryptophan + H2O. It participates in amino-acid biosynthesis; L-tryptophan biosynthesis; L-tryptophan from chorismate: step 5/5. Functionally, the alpha subunit is responsible for the aldol cleavage of indoleglycerol phosphate to indole and glyceraldehyde 3-phosphate. This Staphylococcus saprophyticus subsp. saprophyticus (strain ATCC 15305 / DSM 20229 / NCIMB 8711 / NCTC 7292 / S-41) protein is Tryptophan synthase alpha chain.